Reading from the N-terminus, the 117-residue chain is Large ribosomal subunit protein bL19 (117 aa).

This sequence belongs to the bacterial ribosomal protein bL19 family.

Its function is as follows. This protein is located at the 30S-50S ribosomal subunit interface and may play a role in the structure and function of the aminoacyl-tRNA binding site. In Colwellia psychrerythraea (strain 34H / ATCC BAA-681) (Vibrio psychroerythus), this protein is Large ribosomal subunit protein bL19.